A 127-amino-acid chain; its full sequence is UPF0389 protein GA21628 (127 aa).

A helical transmembrane segment spans residues 69 to 88 (IRLANIMIALTVIGCGIMVY).

Belongs to the UPF0389 family.

The protein resides in the membrane. The protein is UPF0389 protein GA21628 of Drosophila pseudoobscura pseudoobscura (Fruit fly).